Here is a 538-residue protein sequence, read N- to C-terminus: Calcyphosin-2 (538 aa).

A compositionally biased stretch (polar residues) spans 134–146 (RNAENTKSNVTHK). The interval 134 to 154 (RNAENTKSNVTHKQSPRNKID) is disordered. EF-hand domains are found at residues 426 to 461 (RILT…FHLE), 462 to 497 (VSEK…EMNE), and 498 to 533 (YRKS…KKHS). Ca(2+)-binding residues include Asp-439, Asn-443, Asp-450, Asn-477, Asn-479, Lys-481, Glu-486, Asp-511, Asn-513, Ser-515, Ser-517, and Asn-522.

As to expression, abundantly expressed in many tissues. Expressed in brain, colon, heart, kidney, liver, lung, liver, pancreas, placenta, skeletal muscle, testis and thymus. Highest expression in colon, testis, lung, placenta and brain.

This chain is Calcyphosin-2, found in Homo sapiens (Human).